The primary structure comprises 307 residues: F-box protein At5g03100 (307 aa).

Residues 8 to 54 (VDFISSLPDEILHHILANTPTKLAIRTSVLSKRWKHVWYETPSISIV) form the F-box domain.

The sequence is that of F-box protein At5g03100 from Arabidopsis thaliana (Mouse-ear cress).